A 314-amino-acid polypeptide reads, in one-letter code: NADH-ubiquinone oxidoreductase chain 2 (314 aa).

9 helical membrane-spanning segments follow: residues 13 to 35 (LGVMLIGTILSVSSEELVGVWLG), 61 to 80 (YFVVQSTGSILMLVGFVSLM), 85 to 107 (VSGLVMSTAXTVLKSGVFPLHSW), 117 to 139 (WLASGLMLTWQKVAPLVFLSMIL), 144 to 166 (LWVVIVSMAGIGAVGGLNQNSVR), 189 to 209 (VVFVGYFAVYSLSVGLFFYGC), 224 to 244 (AASGMGLLMLMGMPPFLGFLA), 246 to 266 (VLVFLMSGSPVIVACIMGSVI), and 294 to 314 (IWSLVICMNIMGGALILVSFI).

The protein belongs to the complex I subunit 2 family.

Its subcellular location is the mitochondrion inner membrane. It carries out the reaction a ubiquinone + NADH + 5 H(+)(in) = a ubiquinol + NAD(+) + 4 H(+)(out). In terms of biological role, core subunit of the mitochondrial membrane respiratory chain NADH dehydrogenase (Complex I) that is believed to belong to the minimal assembly required for catalysis. Complex I functions in the transfer of electrons from NADH to the respiratory chain. The immediate electron acceptor for the enzyme is believed to be ubiquinone. This chain is NADH-ubiquinone oxidoreductase chain 2 (ND2), found in Mytilus edulis (Blue mussel).